The sequence spans 288 residues: Energy-coupling factor transporter ATP-binding protein EcfA2 (288 aa).

One can recognise an ABC transporter domain in the interval 3–245; it reads IIVKNLTHIY…NASKLKDIGL (243 aa). 40–47 contacts ATP; that stretch reads GHTGSGKS.

This sequence belongs to the ABC transporter superfamily. Energy-coupling factor EcfA family. As to quaternary structure, forms a stable energy-coupling factor (ECF) transporter complex composed of 2 membrane-embedded substrate-binding proteins (S component), 2 ATP-binding proteins (A component) and 2 transmembrane proteins (T component).

The protein localises to the cell membrane. ATP-binding (A) component of a common energy-coupling factor (ECF) ABC-transporter complex. Unlike classic ABC transporters this ECF transporter provides the energy necessary to transport a number of different substrates. In Clostridioides difficile (strain 630) (Peptoclostridium difficile), this protein is Energy-coupling factor transporter ATP-binding protein EcfA2.